The following is a 4625-amino-acid chain: Dynein-1-alpha heavy chain, flagellar inner arm I1 complex (4625 aa).

The tract at residues 1-1919 is stem; sequence MDRRLEWVKE…LIRQCTGLFK (1919 aa). The segment covering 70–84 has biased composition (acidic residues); sequence EQAPEAEDGEGEEHD. The disordered stretch occupies residues 70-163; it reads EQAPEAEDGE…DEPPAPPAPK (94 aa). The segment covering 111 to 140 has biased composition (low complexity); sequence EDAPAAAAEANGANPEDEAAAPADGAADGA. Residues 144–155 are compositionally biased toward acidic residues; the sequence is GGEEGDGAEGDE. 960 to 967 serves as a coordination point for ATP; it reads AGTNSGKS. Coiled coils occupy residues 1227 to 1259 and 1339 to 1409; these read EELKQVLNTVNTIRGESMVMELRYADLEERYRT and TVEL…AVRQ. AAA stretches follow at residues 1920-2141, 2201-2437, 2550-2800, and 2906-3155; these read YGYE…VLVM, DVVE…RRPK, EPPA…IYEG, and NFYN…LRRY. ATP-binding positions include 1958 to 1965, 2242 to 2249, 2588 to 2595, and 2945 to 2952; these read GPAGTGKT, GQTGGGKT, GESGTAKS, and GVGGSGKQ. Coiled-coil stretches lie at residues 3192–3297 and 3400–3494; these read LEKL…IRSY and KRKK…LIGD. A stalk region spans residues 3192-3494; that stretch reads LEKLIQAAVE…ESRRDRLIGD (303 aa). AAA stretches follow at residues 3542-3773 and 3998-4216; these read LTSD…EIAE and ITRF…LIST. Residue 3680-3687 coordinates ATP; that stretch reads GPEISGKT. Residues 3701–3788 adopt a coiled-coil conformation; that stretch reads EQLLNVTLRH…KVTAAEIEET (88 aa).

The protein belongs to the dynein heavy chain family. In terms of assembly, the I1 inner arm complex (also known as the f dynein complex) is a two-headed isoform composed of two heavy chains (1-alpha and 1-beta), three intermediate chains and three light chains. I1 occupies a specific position proximal to the first radial spoke and repeats every 96 nm along the length of the axoneme.

It is found in the cell projection. The protein resides in the cilium. Its subcellular location is the flagellum. It localises to the cytoplasm. The protein localises to the cytoskeleton. It is found in the flagellum axoneme. Force generating protein of eukaryotic cilia and flagella. Produces force towards the minus ends of microtubules. Dynein has ATPase activity; the force-producing power stroke is thought to occur on release of ADP. Required for assembly of the I1 inner arm complex and its targeting to the appropriate axoneme location. Also required for phototaxis. In Chlamydomonas reinhardtii (Chlamydomonas smithii), this protein is Dynein-1-alpha heavy chain, flagellar inner arm I1 complex (DHC1).